The chain runs to 514 residues: G-protein coupled receptor Mth (514 aa).

Residues 1–24 form the signal peptide; sequence MKTLLVLRISTVILVVLVIQKSYA. The Extracellular segment spans residues 25-218; that stretch reads DILECDYFDT…CLIVPSITGQ (194 aa). 5 disulfides stabilise this stretch: Cys-29-Cys-83, Cys-85-Cys-90, Cys-94-Cys-188, Cys-95-Cys-106, and Cys-150-Cys-209. The N-linked (GlcNAc...) asparagine glycan is linked to Asn-45. Asn-109, Asn-123, Asn-170, and Asn-198 each carry an N-linked (GlcNAc...) asparagine glycan. A helical transmembrane segment spans residues 219–239; the sequence is TVVMISSLICMVLTIAVYLFV. Residues 240-248 lie on the Cytoplasmic side of the membrane; that stretch reads KKLQNLHGK. Residues 249–269 traverse the membrane as a helical segment; that stretch reads CFICYMVCLFMGYLFLLLDLW. Residues 270 to 278 lie on the Extracellular side of the membrane; it reads QISISFCKP. The helical transmembrane segment at 279-299 threads the bilayer; the sequence is AGFLGYFFVMAAFFWLSVISL. At 300-320 the chain is on the cytoplasmic side; the sequence is HLWNTFRGSSHKANRFLFEHR. Residues 321 to 341 form a helical membrane-spanning segment; it reads FLAYNTYAWGMAVVLTGITVL. Topologically, residues 342 to 370 are extracellular; the sequence is ADNIVENQDWNPRVGHEGHCWIYTQAWSA. Residues 371 to 391 form a helical membrane-spanning segment; sequence MLYFYGPMVFLIAFNITMFIL. The Cytoplasmic portion of the chain corresponds to 392–424; it reads TAKRILGVKKDIQNFAHRQERKQKLNSDKQTYT. A helical transmembrane segment spans residues 425–445; that stretch reads FFLRLFIIMGLSWSLEIGSYF. Topologically, residues 446–454 are extracellular; sequence SQSNQTWAN. Asn-449 carries an N-linked (GlcNAc...) asparagine glycan. A helical membrane pass occupies residues 455-475; that stretch reads VFLVADYLNWSQGIIIFILFV. Residues 476–514 lie on the Cytoplasmic side of the membrane; the sequence is LKRSTWRLLQESIRGEGEEVNNSEEEISLENTTTRNVLL.

The protein belongs to the G-protein coupled receptor 2 family. Mth subfamily. As to quaternary structure, homodimer.

It is found in the cell membrane. Functionally, involved in biological aging and stress response. Essential for adult survival. Required in the presynaptic motor neuron to up-regulate neurotransmitter exocytosis at larval glutamatergic neuromuscular junctions (NMJs). Regulates a step associated with docking and clustering of vesicles at release sites. SP/Acp70A and sun are agonists that activate mth in vitro. The chain is G-protein coupled receptor Mth (mth) from Drosophila melanogaster (Fruit fly).